Reading from the N-terminus, the 882-residue chain is MTDVTIKTLAAERQTSVERLVQQFADAGIRKSADDSVSAQEKQTLIDHLNQKNSGPDKLTLQRKTRSTLNIPGTGGKSKSVQIEVRKKRTFVKRDPQEAERLAAEEQARREAEESAKREAQQKAEREAAEQAKREAAEQAKREAAEKDKVSNQQDDMTKNAQAEKARREQEAAELKRKAEEEARRKLEEEARRVAEEARRMAEENKWTDNAEPTEDSSDYHVTTSQHARQAEDESDREVEGGRGRGRNAKAARPKKGNKHAESKADREEARAAVRGGKGGKRKGSSLQQGFQKPAQAVNRDVVIGETITVGELANKMAVKGSQVIKAMMKLGAMATINQVIDQETAQLVAEEMGHKVILRRENELEEAVMSDRDTGAAAEPRAPVVTIMGHVDHGKTSLLDYIRSTKVASGEAGGITQHIGAYHVETENGMITFLDTPGHAAFTSMRARGAQATDIVVLVVAADDGVMPQTIEAIQHAKAAQVPVVVAVNKIDKPEADPDRVKNELSQYGILPEEWGGESQFVHVSAKAGTGIDELLDAILLQAEVLELKAVRKGMASGAVIESFLDKGRGPVATVLVREGTLHKGDIVLCGFEYGRVRAMRNELGQEVLEAGPSIPVEILGLSGVPAAGDEVTVVRDEKKAREVALYRQGKFREVKLARQQKSKLENMFANMTEGEVHEVNIVLKADVQGSVEAISDSLLKLSTDEVKVKIIGSGVGGITETDATLAAASNAILVGFNVRADASARKVIEAESLDLRYYSVIYNLIDEVKAAMSGMLSPELKQQIIGLAEVRDVFKSPKFGAIAGCMVTEGVVKRHNPIRVLRDNVVIYEGELESLRRFKDDVNEVRNGMECGIGVKNYNDVRTGDVIEVFEIIEIQRTIA.

The tract at residues 28-296 is disordered; sequence GIRKSADDSV…LQQGFQKPAQ (269 aa). The segment covering 67-81 has biased composition (polar residues); sequence STLNIPGTGGKSKSV. Residues 92 to 209 are compositionally biased toward basic and acidic residues; the sequence is VKRDPQEAER…RMAEENKWTD (118 aa). Basic residues predominate over residues 244 to 258; sequence GRGRNAKAARPKKGN. Residues 259-272 are compositionally biased toward basic and acidic residues; it reads KHAESKADREEARA. Residues 381-550 enclose the tr-type G domain; it reads PRAPVVTIMG…LLQAEVLELK (170 aa). Residues 390–397 form a G1 region; the sequence is GHVDHGKT. Position 390–397 (390–397) interacts with GTP; the sequence is GHVDHGKT. Positions 415–419 are G2; it reads GITQH. The tract at residues 436-439 is G3; that stretch reads DTPG. Residues 436–440 and 490–493 each bind GTP; these read DTPGH and NKID. The tract at residues 490-493 is G4; it reads NKID. A G5 region spans residues 526 to 528; that stretch reads SAK. At Lys800 the chain carries N6-acetyllysine.

This sequence belongs to the TRAFAC class translation factor GTPase superfamily. Classic translation factor GTPase family. IF-2 subfamily.

The protein resides in the cytoplasm. One of the essential components for the initiation of protein synthesis. Protects formylmethionyl-tRNA from spontaneous hydrolysis and promotes its binding to the 30S ribosomal subunits. Also involved in the hydrolysis of GTP during the formation of the 70S ribosomal complex. The chain is Translation initiation factor IF-2 from Shigella boydii serotype 4 (strain Sb227).